The primary structure comprises 358 residues: Ribosomal RNA large subunit methyltransferase M (358 aa).

S-adenosyl-L-methionine-binding positions include Ser-183, 216 to 219 (APGG), Asp-235, Asp-255, and Asp-271. The active-site Proton acceptor is the Lys-300.

It belongs to the class I-like SAM-binding methyltransferase superfamily. RNA methyltransferase RlmE family. RlmM subfamily. As to quaternary structure, monomer.

The protein resides in the cytoplasm. The enzyme catalyses cytidine(2498) in 23S rRNA + S-adenosyl-L-methionine = 2'-O-methylcytidine(2498) in 23S rRNA + S-adenosyl-L-homocysteine + H(+). Functionally, catalyzes the 2'-O-methylation at nucleotide C2498 in 23S rRNA. In Pseudomonas fluorescens (strain SBW25), this protein is Ribosomal RNA large subunit methyltransferase M.